Reading from the N-terminus, the 310-residue chain is Beta-lactamase AST-1 (310 aa).

An N-terminal signal peptide occupies residues 1-31 (MTFSALPFRRADRRRLLAAALAACALTLTAA). Cys32 carries the N-palmitoyl cysteine lipid modification. The S-diacylglycerol cysteine moiety is linked to residue Cys32. The active-site Acyl-ester intermediate is the Ser91. Ser151 lines the substrate pocket. Catalysis depends on Glu187, which acts as the Proton acceptor. 255–257 (KTG) contacts substrate.

Belongs to the class-A beta-lactamase family.

It is found in the cell membrane. It carries out the reaction a beta-lactam + H2O = a substituted beta-amino acid. With respect to regulation, inhibited by clavulanic acid. Confers high levels of resistance to amoxicillin, benzylpenicillin, piperacillin, ticarcillin and cephalothin. Not active against ceftazidime, cefotaxime and aztreonam. The chain is Beta-lactamase AST-1 (bla) from Nocardia asteroides.